The following is a 61-amino-acid chain: Small ribosomal subunit protein uS14 (61 aa).

Positions 24, 27, 40, and 43 each coordinate Zn(2+).

This sequence belongs to the universal ribosomal protein uS14 family. Zinc-binding uS14 subfamily. In terms of assembly, part of the 30S ribosomal subunit. Contacts proteins S3 and S10. The cofactor is Zn(2+).

Functionally, binds 16S rRNA, required for the assembly of 30S particles and may also be responsible for determining the conformation of the 16S rRNA at the A site. The sequence is that of Small ribosomal subunit protein uS14 from Streptococcus thermophilus (strain CNRZ 1066).